Reading from the N-terminus, the 544-residue chain is Lariat debranching enzyme (544 aa).

A divalent metal cation-binding residues include C8, H10, D39, and N84. Residues 124 to 154 (SGIFKSHDYRKGHFECPPYNSSTIRSIYHVR) are lariat recognition loop. The residue at position 128 (K128) is an N6-acetyllysine. Positions 174, 226, and 228 each coordinate a divalent metal cation. Residues 395 to 412 (EYEEQDDVESNDSGEDQS) are compositionally biased toward acidic residues. Residues 395 to 463 (EYEEQDDVES…PSDQASEFSA (69 aa)) form a disordered region. A compositionally biased stretch (polar residues) spans 413–425 (EYNTDTSALSSIN). Over residues 429–439 (IMLDEEEDEDS) the composition is skewed to acidic residues. Positions 445-463 (SGMNTPSVEPSDQASEFSA) are enriched in polar residues. S464, S474, S478, S479, S485, S499, and S514 each carry phosphoserine. A disordered region spans residues 476–544 (IVSSDDTVDS…AVDDDDDDAA (69 aa)). Residues 512 to 522 (RLSDEHEPEQR) are compositionally biased toward basic and acidic residues.

It belongs to the lariat debranching enzyme family. It depends on Fe(2+) as a cofactor. Zn(2+) serves as cofactor. Mn(2+) is required as a cofactor. In terms of tissue distribution, ubiquitously expressed, strongest expression in the spinal cord and brainstem.

It localises to the nucleus. Its activity is regulated as follows. Active in presence of diverse metals including Fe(2+), Zn(2+), Mn(2+). Also activated by Ca(2+). Binds two metal cations in two adjacent alpha and beta metal-binding pockets. Cleaves the 2'-5' phosphodiester linkage at the branch point of excised lariat intron RNA and converts them into linear molecules that can be subsequently degraded, thereby facilitating ribonucleotide turnover. Linked to its role in pre-mRNA processing mechanism, may also participate in retrovirus replication via an RNA lariat intermediate in cDNA synthesis and have an antiviral cell-intrinsic defense function in the brainstem. This is Lariat debranching enzyme (DBR1) from Homo sapiens (Human).